A 156-amino-acid polypeptide reads, in one-letter code: Large ribosomal subunit protein uL22 (156 aa).

It belongs to the universal ribosomal protein uL22 family. As to quaternary structure, part of the 50S ribosomal subunit.

Its function is as follows. This protein binds specifically to 23S rRNA. It makes multiple contacts with different domains of the 23S rRNA in the assembled 50S subunit and ribosome. The globular domain of the protein is located near the polypeptide exit tunnel on the outside of the subunit, while an extended beta-hairpin is found that lines the wall of the exit tunnel in the center of the 70S ribosome. This chain is Large ribosomal subunit protein uL22, found in Hyperthermus butylicus (strain DSM 5456 / JCM 9403 / PLM1-5).